The sequence spans 130 residues: uncharacterized protein (130 aa).

Residues 1-100 are disordered; that stretch reads MSSNSDNTEC…AEPDAAKEEP (100 aa). Basic and acidic residues-rich tracts occupy residues 57 to 75 and 91 to 100; these read YTTR…KMMD and AEPDAAKEEP.

This is an uncharacterized protein from Equine herpesvirus 1 (strain Ab4p) (EHV-1).